An 86-amino-acid polypeptide reads, in one-letter code: Large ribosomal subunit protein uL23 (86 aa).

Belongs to the universal ribosomal protein uL23 family. As to quaternary structure, part of the 50S ribosomal subunit. Contacts protein L29.

In terms of biological role, binds to 23S rRNA. One of the proteins that surrounds the polypeptide exit tunnel on the outside of the ribosome. The polypeptide is Large ribosomal subunit protein uL23 (Methanobrevibacter smithii (strain ATCC 35061 / DSM 861 / OCM 144 / PS)).